The sequence spans 154 residues: NADPH-dependent 7-cyano-7-deazaguanine reductase (154 aa).

A disordered region spans residues 1–24; sequence MPKTDVSGLSQLGTKVDLPQSPEE. Catalysis depends on cysteine 52, which acts as the Thioimide intermediate. Aspartate 59 acts as the Proton donor in catalysis. Residues 74–76 and 93–94 contribute to the substrate site; these read VES and HE.

The protein belongs to the GTP cyclohydrolase I family. QueF type 1 subfamily.

It is found in the cytoplasm. It catalyses the reaction 7-aminomethyl-7-carbaguanine + 2 NADP(+) = 7-cyano-7-deazaguanine + 2 NADPH + 3 H(+). It participates in tRNA modification; tRNA-queuosine biosynthesis. Functionally, catalyzes the NADPH-dependent reduction of 7-cyano-7-deazaguanine (preQ0) to 7-aminomethyl-7-deazaguanine (preQ1). This Sinorhizobium fredii (strain NBRC 101917 / NGR234) protein is NADPH-dependent 7-cyano-7-deazaguanine reductase.